Here is a 168-residue protein sequence, read N- to C-terminus: Large ribosomal subunit protein uL5 (168 aa).

Belongs to the universal ribosomal protein uL5 family. Part of the 50S ribosomal subunit; contacts the 5S rRNA and probably tRNA. Forms a bridge to the 30S subunit in the 70S ribosome.

In terms of biological role, this is one of the proteins that bind and probably mediate the attachment of the 5S RNA into the large ribosomal subunit, where it forms part of the central protuberance. In the 70S ribosome it contacts protein S13 of the 30S subunit (bridge B1b), connecting the 2 subunits; this bridge is implicated in subunit movement. May contact the P site tRNA; the 5S rRNA and some of its associated proteins might help stabilize positioning of ribosome-bound tRNAs. This Methanosphaera stadtmanae (strain ATCC 43021 / DSM 3091 / JCM 11832 / MCB-3) protein is Large ribosomal subunit protein uL5.